Here is a 216-residue protein sequence, read N- to C-terminus: MOB kinase activator 3C (216 aa).

4 residues coordinate Zn(2+): Cys-82, Cys-87, His-164, and His-169.

This sequence belongs to the MOB1/phocein family.

May regulate the activity of kinases. This chain is MOB kinase activator 3C (MOB3C), found in Homo sapiens (Human).